The following is a 203-amino-acid chain: MAASIIPKEVSLDETGHIKLFNKFPFEGVEVKDISLVDYITIGNGQPLPHTAGRFQTKRFRKARCFIVERLTNSLMMNGRNNGKKLLATRIVKHAFEIIALLTDQNPLQVLVDAVAACGPREDSTRIGSAGTVRRQAVDVSPLRRVNQALALITIGAREAAFRNVKSISECLAEEIINAAKGSSNSYAIKKKDELERVAKSNR.

Belongs to the universal ribosomal protein uS7 family. In terms of assembly, component of the small ribosomal subunit (SSU). Mature yeast ribosomes consist of a small (40S) and a large (60S) subunit. The 40S small subunit contains 1 molecule of ribosomal RNA (18S rRNA) and at least 33 different proteins. The large 60S subunit contains 3 rRNA molecules (25S, 5.8S and 5S rRNA) and at least 46 different proteins.

The protein resides in the cytoplasm. In terms of biological role, component of the ribosome, a large ribonucleoprotein complex responsible for the synthesis of proteins in the cell. The small ribosomal subunit (SSU) binds messenger RNAs (mRNAs) and translates the encoded message by selecting cognate aminoacyl-transfer RNA (tRNA) molecules. The large subunit (LSU) contains the ribosomal catalytic site termed the peptidyl transferase center (PTC), which catalyzes the formation of peptide bonds, thereby polymerizing the amino acids delivered by tRNAs into a polypeptide chain. The nascent polypeptides leave the ribosome through a tunnel in the LSU and interact with protein factors that function in enzymatic processing, targeting, and the membrane insertion of nascent chains at the exit of the ribosomal tunnel. In Schizosaccharomyces pombe (strain 972 / ATCC 24843) (Fission yeast), this protein is Small ribosomal subunit protein uS7B (rps502).